A 485-amino-acid polypeptide reads, in one-letter code: Protein disulfide isomerase-like 5-4 (485 aa).

Residues 114–263 (VPTGSEFHPG…LVAAMETYVA (150 aa)) form the Thioredoxin domain. Residue Cys170 is the Nucleophile of the active site. A helical transmembrane segment spans residues 444-464 (FSHFITNVCAIIGGVFTVAGI).

This sequence belongs to the protein disulfide isomerase family.

The protein localises to the membrane. Acts as a protein-folding catalyst that interacts with nascent polypeptides to catalyze the formation, isomerization, and reduction or oxidation of disulfide bonds. May play a role in storage protein biogenesis. This is Protein disulfide isomerase-like 5-4 (PDIL5-4) from Oryza sativa subsp. japonica (Rice).